The following is a 413-amino-acid chain: PAB1-binding protein 2 (413 aa).

A compositionally biased stretch (low complexity) spans methionine 1–threonine 23. Residues methionine 1–glutamine 36 form a disordered region. 3 KH domains span residues aspartate 66–isoleucine 130, glutamate 148–isoleucine 213, and phenylalanine 330–isoleucine 394.

In terms of assembly, interacts with PAB1.

It localises to the nucleus. In Saccharomyces cerevisiae (strain ATCC 204508 / S288c) (Baker's yeast), this protein is PAB1-binding protein 2 (PBP2).